A 153-amino-acid chain; its full sequence is Superoxide dismutase [Cu-Zn] (153 aa).

Histidine 45, histidine 47, and histidine 62 together coordinate Cu cation. An intrachain disulfide couples cysteine 56 to cysteine 145. Residues histidine 62, histidine 70, histidine 79, and aspartate 82 each coordinate Zn(2+). Cu cation is bound at residue histidine 119.

It belongs to the Cu-Zn superoxide dismutase family. As to quaternary structure, homodimer. It depends on Cu cation as a cofactor. Requires Zn(2+) as cofactor.

It localises to the cytoplasm. It catalyses the reaction 2 superoxide + 2 H(+) = H2O2 + O2. In terms of biological role, destroys radicals which are normally produced within the cells and which are toxic to biological systems. The chain is Superoxide dismutase [Cu-Zn] from Drosophila willistoni (Fruit fly).